The sequence spans 283 residues: Protein FAM170B (283 aa).

Positions 1–11 (MKCYFTDHRGE) are enriched in basic and acidic residues. Disordered regions lie at residues 1–58 (MKCY…REEG) and 246–283 (AQGQ…QEKQ).

It belongs to the FAM170 family. As to quaternary structure, interacts with GOPC. As to expression, exclusively expressed in adult testis.

The protein resides in the cytoplasmic vesicle. It is found in the secretory vesicle. Its subcellular location is the acrosome. It localises to the acrosome outer membrane. In terms of biological role, plays a role in fertilization through the acrosome reaction. The sequence is that of Protein FAM170B from Homo sapiens (Human).